A 372-amino-acid polypeptide reads, in one-letter code: Alpha-1-antitrypsin homolog (372 aa).

Residues M1–R19 form the signal peptide. N-linked (GlcNAc...) asparagine glycosylation is found at N214 and N226. An RCL region spans residues A328–R347.

Belongs to the serpin family.

The protein resides in the secreted. This Cyprinus carpio (Common carp) protein is Alpha-1-antitrypsin homolog.